The chain runs to 252 residues: Neurexophilin-3 (252 aa).

The first 22 residues, 1 to 22 (MQLTRCCFVFLVQGSLYLVICG), serve as a signal peptide directing secretion. The tract at residues 23–75 (QDDGPPGSEDPEHDDHEGQPRPRVPRKRGHISPKSRPLANSTLLGLLAPPGEV) is II. A disordered region spans residues 27–59 (PPGSEDPEHDDHEGQPRPRVPRKRGHISPKSRP). A compositionally biased stretch (basic residues) spans 45–55 (RVPRKRGHISP). N-linked (GlcNAc...) asparagine glycans are attached at residues N62, N127, N137, and N143. The tract at residues 76–157 (WGVLGQPPNR…LVPPSKAVEF (82 aa)) is III. The interval 158–166 (HQEQQIFIE) is IV (linker domain). The segment at 167–252 (AKASKIFNCR…HSDTPYYPSG (86 aa)) is v (Cys-rich).

The protein belongs to the neurexophilin family. In terms of processing, may be proteolytically processed at the boundary between the N-terminal non-conserved and the central conserved domain in neuron-like cells. In terms of tissue distribution, highest level in brain, present also in lung, kidney and testis.

The protein localises to the secreted. In terms of biological role, may be signaling molecules that resemble neuropeptides. Ligand for alpha-neurexins. This chain is Neurexophilin-3 (Nxph3), found in Mus musculus (Mouse).